We begin with the raw amino-acid sequence, 249 residues long: tRNA (guanine-N(1)-)-methyltransferase (249 aa).

Residues G112 and 132–137 (LGDFVL) contribute to the S-adenosyl-L-methionine site.

This sequence belongs to the RNA methyltransferase TrmD family. Homodimer.

It localises to the cytoplasm. It catalyses the reaction guanosine(37) in tRNA + S-adenosyl-L-methionine = N(1)-methylguanosine(37) in tRNA + S-adenosyl-L-homocysteine + H(+). In terms of biological role, specifically methylates guanosine-37 in various tRNAs. The polypeptide is tRNA (guanine-N(1)-)-methyltransferase (Geobacter sp. (strain M21)).